A 131-amino-acid polypeptide reads, in one-letter code: Probable ATP synthase subunit g 1, mitochondrial (131 aa).

Belongs to the ATPase g subunit family. In terms of assembly, subunit of the F-type ATPase which has 2 components, CF(1) - the catalytic core - and CF(0) - the membrane proton channel.

Its subcellular location is the mitochondrion membrane. Mitochondrial membrane ATP synthase (F(1)F(0) ATP synthase or Complex V) produces ATP from ADP in the presence of a proton gradient across the membrane which is generated by electron transport complexes of the respiratory chain. F-type ATPases consist of two structural domains, F(1) - containing the extramembraneous catalytic core, and F(0) - containing the membrane proton channel, linked together by a central stalk and a peripheral stalk. During catalysis, ATP synthesis in the catalytic domain of F(1) is coupled via a rotary mechanism of the central stalk subunits to proton translocation. Part of the complex F(0) domain. Minor subunit located with subunit a in the membrane. The protein is Probable ATP synthase subunit g 1, mitochondrial of Caenorhabditis elegans.